Reading from the N-terminus, the 141-residue chain is Hemoglobin subunit alpha-3 (141 aa).

In terms of domain architecture, Globin spans 1–141; the sequence is VLSPADKTNV…VSTVLTSKYR (141 aa). O2 is bound at residue His58. His87 is a heme b binding site.

It belongs to the globin family. Heterotetramer of two alpha chains and two beta chains. In terms of tissue distribution, red blood cells.

Functionally, involved in oxygen transport from the lung to the various peripheral tissues. The protein is Hemoglobin subunit alpha-3 of Pan troglodytes (Chimpanzee).